Here is a 35-residue protein sequence, read N- to C-terminus: Cupiennin-1c (35 aa).

Glutamic acid 1-amide is present on Glu35.

Expressed by the venom gland.

Its subcellular location is the secreted. Its function is as follows. Has antimicrobial activity against E.coli, E.faecalis, P.aeruginosa, and S.aureus. The chain is Cupiennin-1c from Cupiennius salei (American wandering spider).